A 135-amino-acid chain; its full sequence is Large ribosomal subunit protein bL19 (135 aa).

It belongs to the bacterial ribosomal protein bL19 family.

Functionally, this protein is located at the 30S-50S ribosomal subunit interface and may play a role in the structure and function of the aminoacyl-tRNA binding site. The polypeptide is Large ribosomal subunit protein bL19 (Xanthomonas oryzae pv. oryzae (strain KACC10331 / KXO85)).